The chain runs to 94 residues: U27-theraphotoxin-Cg1a (94 aa).

The N-terminal stretch at 1–22 (MIFLLPPVIFVMLLAESVLILG) is a signal peptide. Positions 23–58 (DSEDADLMEMVQMSRPFFNPIIPAVEFVDLREERQR) are excised as a propeptide. 3 disulfide bridges follow: C60–C78, C67–C83, and C77–C88.

It belongs to the neurotoxin 14 (magi-1) family. OAIP-1 subfamily. As to expression, expressed by the venom gland.

It localises to the secreted. Probable ion channel inhibitor. The chain is U27-theraphotoxin-Cg1a from Chilobrachys guangxiensis (Chinese earth tiger tarantula).